The sequence spans 132 residues: Large-conductance mechanosensitive channel (132 aa).

Transmembrane regions (helical) follow at residues 11-31 (FISR…GAFG) and 75-95 (GSFL…FLLV).

This sequence belongs to the MscL family. As to quaternary structure, homopentamer.

Its subcellular location is the cell inner membrane. In terms of biological role, channel that opens in response to stretch forces in the membrane lipid bilayer. May participate in the regulation of osmotic pressure changes within the cell. In Synechococcus sp. (strain JA-2-3B'a(2-13)) (Cyanobacteria bacterium Yellowstone B-Prime), this protein is Large-conductance mechanosensitive channel.